Consider the following 242-residue polypeptide: Pyridoxine 5'-phosphate synthase (242 aa).

Asparagine 7 contacts 3-amino-2-oxopropyl phosphate. 9–10 (DH) is a binding site for 1-deoxy-D-xylulose 5-phosphate. Residue arginine 18 participates in 3-amino-2-oxopropyl phosphate binding. The Proton acceptor role is filled by histidine 44. 1-deoxy-D-xylulose 5-phosphate contacts are provided by arginine 46 and histidine 51. Glutamate 71 functions as the Proton acceptor in the catalytic mechanism. Threonine 101 lines the 1-deoxy-D-xylulose 5-phosphate pocket. The active-site Proton donor is histidine 192. 3-amino-2-oxopropyl phosphate-binding positions include glycine 193 and 214–215 (GH).

It belongs to the PNP synthase family. Homooctamer; tetramer of dimers.

The protein resides in the cytoplasm. The catalysed reaction is 3-amino-2-oxopropyl phosphate + 1-deoxy-D-xylulose 5-phosphate = pyridoxine 5'-phosphate + phosphate + 2 H2O + H(+). Its pathway is cofactor biosynthesis; pyridoxine 5'-phosphate biosynthesis; pyridoxine 5'-phosphate from D-erythrose 4-phosphate: step 5/5. Functionally, catalyzes the complicated ring closure reaction between the two acyclic compounds 1-deoxy-D-xylulose-5-phosphate (DXP) and 3-amino-2-oxopropyl phosphate (1-amino-acetone-3-phosphate or AAP) to form pyridoxine 5'-phosphate (PNP) and inorganic phosphate. This Synechocystis sp. (strain ATCC 27184 / PCC 6803 / Kazusa) protein is Pyridoxine 5'-phosphate synthase.